The primary structure comprises 473 residues: Adenosylhomocysteinase (473 aa).

Residues threonine 60, aspartate 135, and glutamate 197 each coordinate substrate. 198–200 (TTT) provides a ligand contact to NAD(+). Lysine 227 and aspartate 231 together coordinate substrate. Residues asparagine 232, 261–266 (GFGDVG), glutamate 284, asparagine 319, 340–342 (IGH), and asparagine 385 contribute to the NAD(+) site.

This sequence belongs to the adenosylhomocysteinase family. NAD(+) serves as cofactor.

Its subcellular location is the cytoplasm. The catalysed reaction is S-adenosyl-L-homocysteine + H2O = L-homocysteine + adenosine. The protein operates within amino-acid biosynthesis; L-homocysteine biosynthesis; L-homocysteine from S-adenosyl-L-homocysteine: step 1/1. Functionally, may play a key role in the regulation of the intracellular concentration of adenosylhomocysteine. This chain is Adenosylhomocysteinase, found in Bradyrhizobium sp. (strain BTAi1 / ATCC BAA-1182).